A 505-amino-acid chain; its full sequence is N-succinylglutamate 5-semialdehyde dehydrogenase (505 aa).

Residue 234–239 coordinates NAD(+); the sequence is GSAHTG. Active-site residues include E257 and C291.

It belongs to the aldehyde dehydrogenase family. AstD subfamily.

The catalysed reaction is N-succinyl-L-glutamate 5-semialdehyde + NAD(+) + H2O = N-succinyl-L-glutamate + NADH + 2 H(+). Its pathway is amino-acid degradation; L-arginine degradation via AST pathway; L-glutamate and succinate from L-arginine: step 4/5. Functionally, catalyzes the NAD-dependent reduction of succinylglutamate semialdehyde into succinylglutamate. This is N-succinylglutamate 5-semialdehyde dehydrogenase from Yersinia pseudotuberculosis serotype IB (strain PB1/+).